A 764-amino-acid polypeptide reads, in one-letter code: 5-methyltetrahydropteroyltriglutamate--homocysteine methyltransferase (764 aa).

5-methyltetrahydropteroyltri-L-glutamate-binding positions include Arg-16–Lys-19 and Lys-121. Residues Ile-440–Ser-442 and Glu-493 each bind L-homocysteine. Residues Ile-440–Ser-442 and Glu-493 each bind L-methionine. Residues Arg-524–Cys-525 and Trp-570 contribute to the 5-methyltetrahydropteroyltri-L-glutamate site. Position 608 (Asp-608) interacts with L-homocysteine. L-methionine is bound at residue Asp-608. 5-methyltetrahydropteroyltri-L-glutamate is bound at residue Glu-614. Zn(2+)-binding residues include His-650, Cys-652, and Glu-674. His-703 (proton donor) is an active-site residue. A Zn(2+)-binding site is contributed by Cys-735.

This sequence belongs to the vitamin-B12 independent methionine synthase family. Requires Zn(2+) as cofactor.

The enzyme catalyses 5-methyltetrahydropteroyltri-L-glutamate + L-homocysteine = tetrahydropteroyltri-L-glutamate + L-methionine. It participates in amino-acid biosynthesis; L-methionine biosynthesis via de novo pathway; L-methionine from L-homocysteine (MetE route): step 1/1. Catalyzes the transfer of a methyl group from 5-methyltetrahydrofolate to homocysteine resulting in methionine formation. This Burkholderia ambifaria (strain MC40-6) protein is 5-methyltetrahydropteroyltriglutamate--homocysteine methyltransferase.